Reading from the N-terminus, the 451-residue chain is Eukaryotic translation initiation factor 3 subunit E (451 aa).

The PCI domain occupies 256–425 (TDLFFSPAYI…GTVIMNHPPQ (170 aa)).

It belongs to the eIF-3 subunit E family. In terms of assembly, component of the eukaryotic translation initiation factor 3 (eIF-3) complex.

It localises to the cytoplasm. Functionally, component of the eukaryotic translation initiation factor 3 (eIF-3) complex, which is involved in protein synthesis of a specialized repertoire of mRNAs and, together with other initiation factors, stimulates binding of mRNA and methionyl-tRNAi to the 40S ribosome. The eIF-3 complex specifically targets and initiates translation of a subset of mRNAs involved in cell proliferation. The polypeptide is Eukaryotic translation initiation factor 3 subunit E (int6) (Aspergillus oryzae (strain ATCC 42149 / RIB 40) (Yellow koji mold)).